Here is a 245-residue protein sequence, read N- to C-terminus: Type II restriction enzyme MjaIV (245 aa).

The enzyme catalyses Endonucleolytic cleavage of DNA to give specific double-stranded fragments with terminal 5'-phosphates.. A P subtype restriction enzyme that recognizes the double-stranded sequence 5'-GTNNAC-3'; the cleavage site is unknown. This chain is Type II restriction enzyme MjaIV (mjaIVR), found in Methanocaldococcus jannaschii (strain ATCC 43067 / DSM 2661 / JAL-1 / JCM 10045 / NBRC 100440) (Methanococcus jannaschii).